The following is a 197-amino-acid chain: Probable chemoreceptor glutamine deamidase CheD 2 (197 aa).

It belongs to the CheD family.

It catalyses the reaction L-glutaminyl-[protein] + H2O = L-glutamyl-[protein] + NH4(+). Probably deamidates glutamine residues to glutamate on methyl-accepting chemotaxis receptors (MCPs), playing an important role in chemotaxis. The chain is Probable chemoreceptor glutamine deamidase CheD 2 from Dechloromonas aromatica (strain RCB).